We begin with the raw amino-acid sequence, 310 residues long: N-acyl-aromatic-L-amino acid amidohydrolase (carboxylate-forming) (310 aa).

Zn(2+)-binding residues include histidine 20 and glutamate 23. Residues arginine 62 and 69-70 (NR) contribute to the substrate site. Zn(2+) is bound at residue histidine 113. Positions 176 and 286 each coordinate substrate.

It belongs to the AspA/AstE family. Aspartoacylase subfamily. Homotetramer. Requires Zn(2+) as cofactor.

The protein resides in the apical cell membrane. It is found in the cytoplasm. The catalysed reaction is an N-acyl-aromatic L-alpha-amino acid + H2O = an aromatic L-alpha-amino acid + a carboxylate. It catalyses the reaction an N-acetyl-L-cysteine-S-conjugate + H2O = an S-substituted L-cysteine + acetate. Functionally, plays an important role in deacetylating mercapturic acids in kidney proximal tubules. This is N-acyl-aromatic-L-amino acid amidohydrolase (carboxylate-forming) (acy3) from Xenopus tropicalis (Western clawed frog).